A 209-amino-acid polypeptide reads, in one-letter code: Small ribosomal subunit protein uS4 (209 aa).

Residues 1-13 are compositionally biased toward basic residues; that stretch reads MSTKSRTRSKTRL. 2 disordered regions span residues 1 to 20 and 28 to 49; these read MSTKSRTRSKTRLSRALGIP and YLEKRPYAPGEHGRSKRKQDSD. Residues 95–176 enclose the S4 RNA-binding domain; that stretch reads QRLDALVVRS…PKLPSYLEVE (82 aa).

Belongs to the universal ribosomal protein uS4 family. As to quaternary structure, part of the 30S ribosomal subunit. Contacts protein S5. The interaction surface between S4 and S5 is involved in control of translational fidelity.

In terms of biological role, one of the primary rRNA binding proteins, it binds directly to 16S rRNA where it nucleates assembly of the body of the 30S subunit. Its function is as follows. With S5 and S12 plays an important role in translational accuracy. This is Small ribosomal subunit protein uS4 from Clavibacter michiganensis subsp. michiganensis (strain NCPPB 382).